The chain runs to 369 residues: MSPAATESGRDLSVGVEEEFFLVDESGHLSAAGPDVVTEAGHDIHGLQRELARCQIETATGVCHTGEELHEELRSLRRRLAKAAAGRDLLLLPSGTSLVVEGLPPAITPSPRYEEMARHFGSIVDTVTTCGCHVHVGIPSRDVGVRVSNLVRSWLPVLLALAANSPFHSGHDTAYHSWRHIMWSRWPSAGPPPHFDSADEYEATVGAMIGTGAAMDRGMIYWHVRLADKQPTIEVRIADVAMTAAHAALYAVVVKGLVGWALQSLDDGLTVPWLRAELLRAQLWRAARDGLDGECTSPAADRVLPIRRQLELLNDCVAPGLGPSDRAFLESGLDTVLREGTGAERQRAEFTRVGTLAAVVDLLTREVVS.

The protein belongs to the glutamate--cysteine ligase type 2 family. YbdK subfamily.

The catalysed reaction is L-cysteine + L-glutamate + ATP = gamma-L-glutamyl-L-cysteine + ADP + phosphate + H(+). ATP-dependent carboxylate-amine ligase which exhibits weak glutamate--cysteine ligase activity. This Rhodococcus jostii (strain RHA1) protein is Putative glutamate--cysteine ligase 2-1.